The sequence spans 434 residues: uncharacterized protein (434 aa).

Residues 4-62 form the TRAM domain; sequence LLTIHTQVEGEITALAFGGAGILRYHGFVIFVPFTAPGDQIICRIIEIKKSFAVAELVK. The [4Fe-4S] cluster site is built by Cys-75, Cys-81, Cys-84, and Cys-161. S-adenosyl-L-methionine is bound by residues Gln-266, Tyr-295, Glu-316, and Asn-364. Cys-391 serves as the catalytic Nucleophile.

Belongs to the class I-like SAM-binding methyltransferase superfamily. RNA M5U methyltransferase family.

This is an uncharacterized protein from Protochlamydia amoebophila (strain UWE25).